Here is a 432-residue protein sequence, read N- to C-terminus: Dihydroorotase (432 aa).

2 residues coordinate Zn(2+): H60 and H62. Residues 62–64 and N94 contribute to the substrate site; that span reads HLR. Residues D152, H179, and H232 each coordinate Zn(2+). N278 provides a ligand contact to substrate. D305 is a Zn(2+) binding site. The active site involves D305. Substrate is bound by residues H309 and 323 to 324; that span reads FG.

The protein belongs to the metallo-dependent hydrolases superfamily. DHOase family. Class I DHOase subfamily. Requires Zn(2+) as cofactor.

It catalyses the reaction (S)-dihydroorotate + H2O = N-carbamoyl-L-aspartate + H(+). Its pathway is pyrimidine metabolism; UMP biosynthesis via de novo pathway; (S)-dihydroorotate from bicarbonate: step 3/3. Catalyzes the reversible cyclization of carbamoyl aspartate to dihydroorotate. This is Dihydroorotase from Elusimicrobium minutum (strain Pei191).